The following is a 488-amino-acid chain: 1-aminocyclopropane-1-carboxylate synthase-like protein 1 (488 aa).

The residue at position 273 (Lys-273) is an N6-(pyridoxal phosphate)lysine.

The protein belongs to the class-I pyridoxal-phosphate-dependent aminotransferase family. In terms of assembly, homodimer. Expressed in young leaves and flowers. Not expressed in roots.

This chain is 1-aminocyclopropane-1-carboxylate synthase-like protein 1 (ACS1), found in Arabidopsis thaliana (Mouse-ear cress).